The sequence spans 432 residues: Tol-Pal system protein TolB (432 aa).

The signal sequence occupies residues 1–29; the sequence is MMRNVWKSGLRRSAWIGLLMVLCVGVARA.

The protein belongs to the TolB family. As to quaternary structure, the Tol-Pal system is composed of five core proteins: the inner membrane proteins TolA, TolQ and TolR, the periplasmic protein TolB and the outer membrane protein Pal. They form a network linking the inner and outer membranes and the peptidoglycan layer.

It is found in the periplasm. In terms of biological role, part of the Tol-Pal system, which plays a role in outer membrane invagination during cell division and is important for maintaining outer membrane integrity. The polypeptide is Tol-Pal system protein TolB (Ralstonia nicotianae (strain ATCC BAA-1114 / GMI1000) (Ralstonia solanacearum)).